The primary structure comprises 921 residues: GPI ethanolamine phosphate transferase 1 (921 aa).

The Cytoplasmic segment spans residues 1-9 (MKNNTRFTL). The chain crosses the membrane as a helical span at residues 10–30 (IVVGVLFHLLYLWSIFDIYFI). The Lumenal portion of the chain corresponds to 31-457 (SPLVHGMEQK…TTYNWRFIRT (427 aa)). N-linked (GlcNAc...) asparagine glycans are attached at residues Asn-90, Asn-138, Asn-198, Asn-262, and Asn-286. The helical transmembrane segment at 458–478 (IVTFGFLGWICYSFMIFLKLF) threads the bilayer. At 479–488 (ILNNSQTTHP) the chain is on the cytoplasmic side. The chain crosses the membrane as a helical span at residues 489–509 (SILNISIFTSLGLILNYILFY). The Lumenal segment spans residues 510–516 (QKSPLNF). A helical membrane pass occupies residues 517-537 (YLYLIFPLFFWSKIFSNTAII). At 538–552 (RDGVNEFFKGISKAE) the chain is on the cytoplasmic side. A helical membrane pass occupies residues 553 to 573 (SVIIGLTIISIYEGIVYGFFH). The Lumenal portion of the chain corresponds to 574 to 575 (RW). The chain crosses the membrane as a helical span at residues 576–596 (ILSLILVSFAFYPLVCGVTDL). The Cytoplasmic portion of the chain corresponds to 597–599 (FTN). Residues 600-620 (LLWILTSVGLSSFTLLDAVKI) form a helical membrane-spanning segment. Position 621 (Glu-621) is a topological domain, lumenal. Residues 622–642 (NLQQIQVAGILIVLSSAYAVM) traverse the membrane as a helical segment. At 643–654 (RLSQDISKYTQH) the chain is on the cytoplasmic side. A helical transmembrane segment spans residues 655–675 (LLSIQIFLVSGMLHFTSKSVI). Over 676–684 (SLQKREGLP) the chain is Lumenal. A helical transmembrane segment spans residues 685–705 (AFAQVGGWAILVISLTIMPFL). Residues 706–728 (HYLKPNNNYQVRLLTIYLTFAPS) lie on the Cytoplasmic side of the membrane. Residues 729-749 (FIILSISFEALFYFIFTAYIV) form a helical membrane-spanning segment. Topologically, residues 750–777 (QWLQIEKNIKVLKDEQKSDSNGIQLLRV) are lumenal. A helical transmembrane segment spans residues 778-798 (AIIGFFLQQIAFFGTGNVASI). The Cytoplasmic portion of the chain corresponds to 799–819 (SSFSLDSVYRLLPVFDPFPMG). The chain crosses the membrane as a helical span at residues 820-840 (ALLMLKLIIPYVLLSCGLGIM). Over 841 to 849 (NIQLDIKDY) the chain is Lumenal. A helical transmembrane segment spans residues 850 to 870 (TISSLIISTSDILSLNFFYLL). Residues 871-878 (KTEGSWLD) are Cytoplasmic-facing. Residues 879-899 (IGVTISNYCLAILSSLFMLIL) traverse the membrane as a helical segment. Over 900–921 (EIVGHQLLKNVTRATSSQKKTN) the chain is Lumenal. A glycan (N-linked (GlcNAc...) asparagine) is linked at Asn-909.

The protein belongs to the PIGG/PIGN/PIGO family. PIGN subfamily.

It localises to the endoplasmic reticulum membrane. It participates in glycolipid biosynthesis; glycosylphosphatidylinositol-anchor biosynthesis. Functionally, ethanolamine phosphate transferase involved in glycosylphosphatidylinositol-anchor biosynthesis. Transfers ethanolamine phosphate to the first alpha-1,4-linked mannose of the glycosylphosphatidylinositol precursor of GPI-anchor. The chain is GPI ethanolamine phosphate transferase 1 (MCD4) from Candida glabrata (strain ATCC 2001 / BCRC 20586 / JCM 3761 / NBRC 0622 / NRRL Y-65 / CBS 138) (Yeast).